We begin with the raw amino-acid sequence, 1016 residues long: Kinesin-like protein KIN-14K (1016 aa).

A Calponin-homology (CH) domain is found at 14–121 (ADRRAEVIEW…CLLVLRESVS (108 aa)). The segment at 123–176 (GLRDGTSKAPLRKKWRVPETGEPLVPGVAQGKTSPGEDKRNGLPDPKSQQKTPI) is disordered. Residues 288 to 354 (VNGTNEENQM…EVMTSMHEQQ (67 aa)) are a coiled coil. A Kinesin motor domain is found at 481-808 (NIRVYCRVRP…LKFAERVSGV (328 aa)). 565–572 (GQTGSGKT) contacts ATP. The stretch at 820 to 852 (KDIKELLEQVASLKDTIVRKDTEIEQLQLMKDK) forms a coiled coil. Composition is skewed to polar residues over residues 884 to 893 (NQQSQLSDPQ) and 990 to 1004 (KTPNQTRVQSSQLIG). 2 disordered regions span residues 884–912 (NQQSQLSDPQSYAEVNRDGGPTSYTDITP) and 971–1016 (LTKN…RWQK).

It belongs to the TRAFAC class myosin-kinesin ATPase superfamily. Kinesin family. KIN-14 subfamily.

The chain is Kinesin-like protein KIN-14K from Oryza sativa subsp. japonica (Rice).